The primary structure comprises 243 residues: Carboxy-S-adenosyl-L-methionine synthase (243 aa).

S-adenosyl-L-methionine-binding positions include Tyr40, 65-67 (GCS), 90-91 (DN), 118-119 (DI), Asn133, and Arg200.

The protein belongs to the class I-like SAM-binding methyltransferase superfamily. Cx-SAM synthase family. As to quaternary structure, homodimer.

The catalysed reaction is prephenate + S-adenosyl-L-methionine = carboxy-S-adenosyl-L-methionine + 3-phenylpyruvate + H2O. In terms of biological role, catalyzes the conversion of S-adenosyl-L-methionine (SAM) to carboxy-S-adenosyl-L-methionine (Cx-SAM). The sequence is that of Carboxy-S-adenosyl-L-methionine synthase from Shewanella baltica (strain OS223).